The following is a 216-amino-acid chain: Pyridoxine/pyridoxamine 5'-phosphate oxidase (216 aa).

FMN-binding positions include 65-70 (RMVLLK), 80-81 (YT), arginine 86, lysine 87, and glutamine 109. Residue lysine 70 coordinates substrate. Residues tyrosine 127, arginine 131, and serine 135 each coordinate substrate. FMN-binding positions include 144-145 (QS) and tryptophan 189. 195–197 (RLH) provides a ligand contact to substrate. FMN is bound at residue arginine 199.

Belongs to the pyridoxamine 5'-phosphate oxidase family. In terms of assembly, homodimer. Requires FMN as cofactor.

It carries out the reaction pyridoxamine 5'-phosphate + O2 + H2O = pyridoxal 5'-phosphate + H2O2 + NH4(+). The enzyme catalyses pyridoxine 5'-phosphate + O2 = pyridoxal 5'-phosphate + H2O2. Its pathway is cofactor metabolism; pyridoxal 5'-phosphate salvage; pyridoxal 5'-phosphate from pyridoxamine 5'-phosphate: step 1/1. It participates in cofactor metabolism; pyridoxal 5'-phosphate salvage; pyridoxal 5'-phosphate from pyridoxine 5'-phosphate: step 1/1. Its function is as follows. Catalyzes the oxidation of either pyridoxine 5'-phosphate (PNP) or pyridoxamine 5'-phosphate (PMP) into pyridoxal 5'-phosphate (PLP). This is Pyridoxine/pyridoxamine 5'-phosphate oxidase from Sphingopyxis alaskensis (strain DSM 13593 / LMG 18877 / RB2256) (Sphingomonas alaskensis).